A 282-amino-acid chain; its full sequence is Bifunctional protein FolD (282 aa).

NADP(+) is bound by residues 165 to 167 (GRG), T192, and V233.

The protein belongs to the tetrahydrofolate dehydrogenase/cyclohydrolase family. Homodimer.

The enzyme catalyses (6R)-5,10-methylene-5,6,7,8-tetrahydrofolate + NADP(+) = (6R)-5,10-methenyltetrahydrofolate + NADPH. It carries out the reaction (6R)-5,10-methenyltetrahydrofolate + H2O = (6R)-10-formyltetrahydrofolate + H(+). It functions in the pathway one-carbon metabolism; tetrahydrofolate interconversion. Functionally, catalyzes the oxidation of 5,10-methylenetetrahydrofolate to 5,10-methenyltetrahydrofolate and then the hydrolysis of 5,10-methenyltetrahydrofolate to 10-formyltetrahydrofolate. This is Bifunctional protein FolD from Mycobacterium leprae (strain Br4923).